Here is a 316-residue protein sequence, read N- to C-terminus: Thymidylate synthase (316 aa).

DUMP contacts are provided by residues R23 and 178–179; that span reads RR. The Nucleophile role is filled by C198. Residues 218 to 221, N229, and 259 to 261 contribute to the dUMP site; these read RSAD and HLY. D221 is a (6R)-5,10-methylene-5,6,7,8-tetrahydrofolate binding site. A315 provides a ligand contact to (6R)-5,10-methylene-5,6,7,8-tetrahydrofolate.

The protein belongs to the thymidylate synthase family. Bacterial-type ThyA subfamily. In terms of assembly, homodimer.

The protein resides in the cytoplasm. The enzyme catalyses dUMP + (6R)-5,10-methylene-5,6,7,8-tetrahydrofolate = 7,8-dihydrofolate + dTMP. The protein operates within pyrimidine metabolism; dTTP biosynthesis. Its function is as follows. Catalyzes the reductive methylation of 2'-deoxyuridine-5'-monophosphate (dUMP) to 2'-deoxythymidine-5'-monophosphate (dTMP) while utilizing 5,10-methylenetetrahydrofolate (mTHF) as the methyl donor and reductant in the reaction, yielding dihydrofolate (DHF) as a by-product. This enzymatic reaction provides an intracellular de novo source of dTMP, an essential precursor for DNA biosynthesis. This chain is Thymidylate synthase, found in Lacticaseibacillus paracasei (strain ATCC 334 / BCRC 17002 / CCUG 31169 / CIP 107868 / KCTC 3260 / NRRL B-441) (Lactobacillus paracasei).